We begin with the raw amino-acid sequence, 337 residues long: uncharacterized protein (337 aa).

An AFP-like domain is found at S279–D337.

It to B.subtilis SpsE.

This is an uncharacterized protein from Methanocaldococcus jannaschii (strain ATCC 43067 / DSM 2661 / JAL-1 / JCM 10045 / NBRC 100440) (Methanococcus jannaschii).